A 151-amino-acid chain; its full sequence is 3-hydroxyacyl-[acyl-carrier-protein] dehydratase FabZ (151 aa).

H54 is an active-site residue.

The protein belongs to the thioester dehydratase family. FabZ subfamily. Oligomer. Post-translationally, the N-terminus is blocked.

It localises to the cytoplasm. It catalyses the reaction a (3R)-hydroxyacyl-[ACP] = a (2E)-enoyl-[ACP] + H2O. In terms of biological role, involved in unsaturated fatty acids biosynthesis. Catalyzes the dehydration of short chain beta-hydroxyacyl-ACPs and long chain saturated and unsaturated beta-hydroxyacyl-ACPs. This is 3-hydroxyacyl-[acyl-carrier-protein] dehydratase FabZ from Escherichia coli (strain SE11).